The sequence spans 495 residues: DNA double-strand break repair helicase HerA (495 aa).

Residues R142, 151–156 (GSGKSN), and 459–460 (KI) each bind ATP.

This sequence belongs to the HerA family. As to quaternary structure, interacts with Rad50 and Mre11.

It catalyses the reaction Couples ATP hydrolysis with the unwinding of duplex DNA at the replication fork by translocating in the 5'-3' direction. This creates two antiparallel DNA single strands (ssDNA). The leading ssDNA polymer is the template for DNA polymerase III holoenzyme which synthesizes a continuous strand.. The enzyme catalyses ATP + H2O = ADP + phosphate + H(+). The catalysed reaction is Couples ATP hydrolysis with the unwinding of duplex DNA by translocating in the 3'-5' direction.. Its activity is regulated as follows. ATPase activity is slightly stimulated by either circular single- or double-stranded (ds)DNA with a weak preference for dsDNA. Involved in DNA double-strand break (DSB) repair. Probably acts with NurA to stimulate resection of the 5' strand and produce the long 3' single-strand that is required for RadA loading. Has DNA-dependent ATPase activity and bidirectional DNA helicase activity. Loads on either a 3' or a 5' DNA tail for subsequent DNA unwinding; has no activity on blunt-end DNA. This Sulfolobus acidocaldarius (strain ATCC 33909 / DSM 639 / JCM 8929 / NBRC 15157 / NCIMB 11770) protein is DNA double-strand break repair helicase HerA.